The following is a 1047-amino-acid chain: Probable sucrose-phosphate synthase 2 (1047 aa).

The span at 101-123 (EGKNAKREAKREREREKARREVT) shows a compositional bias: basic and acidic residues. Positions 101–153 (EGKNAKREAKREREREKARREVTAEMSEDFSEGEKADLPGEIPTPSDNNTKGR) are disordered. Ser127, Ser131, and Ser159 each carry phosphoserine. A disordered region spans residues 712–731 (KSGSNNGVDTNLDAEDRAAE).

This sequence belongs to the glycosyltransferase 1 family. In terms of assembly, homodimer or homotetramer. As to expression, expressed in roots, cauline leaves, flower buds, flowers and anthers. Highly expressed in maturing nectaries.

The catalysed reaction is beta-D-fructose 6-phosphate + UDP-alpha-D-glucose = sucrose 6(F)-phosphate + UDP + H(+). The protein operates within glycan biosynthesis; sucrose biosynthesis; sucrose from D-fructose 6-phosphate and UDP-alpha-D-glucose: step 1/2. Activity is regulated by phosphorylation and moderated by concentration of metabolites and light. Its function is as follows. Plays a role in photosynthetic sucrose synthesis by catalyzing the rate-limiting step of sucrose biosynthesis from UDP-glucose and fructose- 6-phosphate. Involved in the regulation of carbon partitioning in the leaves of plants. May regulate the synthesis of sucrose and therefore play a major role as a limiting factor in the export of photoassimilates out of the leaf. Plays a role for sucrose availability that is essential for plant growth and fiber elongation. Required for nectar secretion. In Arabidopsis thaliana (Mouse-ear cress), this protein is Probable sucrose-phosphate synthase 2 (SPS2).